Consider the following 129-residue polypeptide: Translation initiation factor 5A (129 aa).

Position 36 is a hypusine (Lys-36).

Belongs to the eIF-5A family.

It localises to the cytoplasm. Functions by promoting the formation of the first peptide bond. This chain is Translation initiation factor 5A (eIF5A), found in Methanobrevibacter smithii (strain ATCC 35061 / DSM 861 / OCM 144 / PS).